We begin with the raw amino-acid sequence, 431 residues long: Glutamate--tRNA ligase 1 (431 aa).

Residues 6–16 carry the 'HIGH' region motif; sequence PSPTGDMHIGN. Residues 235–239 carry the 'KMSKS' region motif; sequence KMSKR. K238 contacts ATP.

The protein belongs to the class-I aminoacyl-tRNA synthetase family. Glutamate--tRNA ligase type 1 subfamily. As to quaternary structure, monomer.

It is found in the cytoplasm. It catalyses the reaction tRNA(Glu) + L-glutamate + ATP = L-glutamyl-tRNA(Glu) + AMP + diphosphate. Functionally, catalyzes the attachment of glutamate to tRNA(Glu) in a two-step reaction: glutamate is first activated by ATP to form Glu-AMP and then transferred to the acceptor end of tRNA(Glu). This Campylobacter curvus (strain 525.92) protein is Glutamate--tRNA ligase 1.